Here is a 76-residue protein sequence, read N- to C-terminus: UPF0346 protein OEOE_1017 (76 aa).

It belongs to the UPF0346 family.

The protein is UPF0346 protein OEOE_1017 of Oenococcus oeni (strain ATCC BAA-331 / PSU-1).